The chain runs to 422 residues: Multifunctional CCA protein (422 aa).

Residues Gly8 and Arg11 each contribute to the ATP site. CTP contacts are provided by Gly8 and Arg11. The Mg(2+) site is built by Asp21 and Asp23. Positions 91, 137, and 140 each coordinate ATP. Residues Arg91, Arg137, and Arg140 each coordinate CTP. Residues 228–329 (TGLHSLMALE…VKLLQSCDAW (102 aa)) form the HD domain. Residues 403–422 (FKQDNAPEAQEKGGEDVGLT) form a disordered region.

It belongs to the tRNA nucleotidyltransferase/poly(A) polymerase family. Bacterial CCA-adding enzyme type 1 subfamily. Monomer. Can also form homodimers and oligomers. It depends on Mg(2+) as a cofactor. Ni(2+) serves as cofactor.

It catalyses the reaction a tRNA precursor + 2 CTP + ATP = a tRNA with a 3' CCA end + 3 diphosphate. It carries out the reaction a tRNA with a 3' CCA end + 2 CTP + ATP = a tRNA with a 3' CCACCA end + 3 diphosphate. Functionally, catalyzes the addition and repair of the essential 3'-terminal CCA sequence in tRNAs without using a nucleic acid template. Adds these three nucleotides in the order of C, C, and A to the tRNA nucleotide-73, using CTP and ATP as substrates and producing inorganic pyrophosphate. tRNA 3'-terminal CCA addition is required both for tRNA processing and repair. Also involved in tRNA surveillance by mediating tandem CCA addition to generate a CCACCA at the 3' terminus of unstable tRNAs. While stable tRNAs receive only 3'-terminal CCA, unstable tRNAs are marked with CCACCA and rapidly degraded. The protein is Multifunctional CCA protein of Hahella chejuensis (strain KCTC 2396).